We begin with the raw amino-acid sequence, 167 residues long: CASP-like protein UU1 (167 aa).

The Cytoplasmic segment spans residues 1-17 (MVELESQEAVTVASTAD). The helical transmembrane segment at 18–38 (IAVDVSLRLLAAATSLASAVV) threads the bilayer. Residues 39–54 (VAANHQQRWGVRVDFT) are Extracellular-facing. Residues 55–75 (LFQVWIGFVAVNLVCTVYAAA) traverse the membrane as a helical segment. Residues 76 to 94 (TAAAARKAMGRWWLHHADA) lie on the Cytoplasmic side of the membrane. A helical membrane pass occupies residues 95 to 115 (VVVNLEAAATAGAGAIGSIAM). The Extracellular portion of the chain corresponds to 116–135 (WGNEASGWYAVCRLYRRYCN). Residues 136 to 156 (AGAAALALSLAAVLLLGVACA) form a helical membrane-spanning segment. The Cytoplasmic portion of the chain corresponds to 157–167 (RSRYPKMPPTT).

This sequence belongs to the Casparian strip membrane proteins (CASP) family. Homodimer and heterodimers.

Its subcellular location is the cell membrane. The chain is CASP-like protein UU1 from Oryza sativa subsp. indica (Rice).